Here is a 284-residue protein sequence, read N- to C-terminus: Ribosomal RNA small subunit methyltransferase A (284 aa).

6 residues coordinate S-adenosyl-L-methionine: asparagine 26, leucine 28, glycine 53, glutamate 74, aspartate 97, and asparagine 127.

It belongs to the class I-like SAM-binding methyltransferase superfamily. rRNA adenine N(6)-methyltransferase family. RsmA subfamily.

The protein localises to the cytoplasm. It catalyses the reaction adenosine(1518)/adenosine(1519) in 16S rRNA + 4 S-adenosyl-L-methionine = N(6)-dimethyladenosine(1518)/N(6)-dimethyladenosine(1519) in 16S rRNA + 4 S-adenosyl-L-homocysteine + 4 H(+). Its function is as follows. Specifically dimethylates two adjacent adenosines (A1518 and A1519) in the loop of a conserved hairpin near the 3'-end of 16S rRNA in the 30S particle. May play a critical role in biogenesis of 30S subunits. The chain is Ribosomal RNA small subunit methyltransferase A from Anaeromyxobacter dehalogenans (strain 2CP-C).